We begin with the raw amino-acid sequence, 141 residues long: Hemoglobin subunit alpha (141 aa).

The region spanning 1–141 is the Globin domain; the sequence is VLSSTDKSNV…VSTVLTSKYR (141 aa). S3 is modified (phosphoserine). K7 and K11 each carry N6-succinyllysine. K16 is subject to N6-acetyllysine; alternate. The residue at position 16 (K16) is an N6-succinyllysine; alternate. At Y24 the chain carries Phosphotyrosine. S35 is modified (phosphoserine). K40 carries the post-translational modification N6-succinyllysine. H58 is a binding site for O2. H87 is a binding site for heme b. S102 bears the Phosphoserine mark. T108 carries the post-translational modification Phosphothreonine. Residues S124 and S131 each carry the phosphoserine modification. T134 and T137 each carry phosphothreonine. S138 is modified (phosphoserine).

Belongs to the globin family. In terms of assembly, heterotetramer of two alpha chains and two beta chains. In terms of tissue distribution, red blood cells.

Functionally, involved in oxygen transport from the lung to the various peripheral tissues. Its function is as follows. Hemopressin acts as an antagonist peptide of the cannabinoid receptor CNR1. Hemopressin-binding efficiently blocks cannabinoid receptor CNR1 and subsequent signaling. In Pteropus poliocephalus (Grey-headed flying fox), this protein is Hemoglobin subunit alpha (HBA).